Reading from the N-terminus, the 239-residue chain is LexA repressor (239 aa).

Residues 26–46 constitute a DNA-binding region (H-T-H motif); sequence FDEMKDALDLASKSGIHRLIT. Catalysis depends on for autocatalytic cleavage activity residues serine 159 and lysine 197.

The protein belongs to the peptidase S24 family. As to quaternary structure, homodimer.

It catalyses the reaction Hydrolysis of Ala-|-Gly bond in repressor LexA.. Functionally, represses a number of genes involved in the response to DNA damage (SOS response), including recA and lexA. In the presence of single-stranded DNA, RecA interacts with LexA causing an autocatalytic cleavage which disrupts the DNA-binding part of LexA, leading to derepression of the SOS regulon and eventually DNA repair. This is LexA repressor from Rhizobium etli (strain ATCC 51251 / DSM 11541 / JCM 21823 / NBRC 15573 / CFN 42).